We begin with the raw amino-acid sequence, 107 residues long: Thioredoxin (107 aa).

A Thioredoxin domain is found at 2 to 107; sequence SEVLHINDAD…QLANFINQHI (106 aa). An intrachain disulfide couples C32 to C35.

It belongs to the thioredoxin family.

Its function is as follows. Participates in various redox reactions through the reversible oxidation of its active center dithiol to a disulfide and catalyzes dithiol-disulfide exchange reactions. In Haemophilus influenzae (strain ATCC 51907 / DSM 11121 / KW20 / Rd), this protein is Thioredoxin (trxA).